Consider the following 46-residue polypeptide: Elongation factor Tu (46 aa).

Residues 1–10 are compositionally biased toward basic and acidic residues; that stretch reads MAKGKFERSK. Positions 1 to 20 are disordered; that stretch reads MAKGKFERSKPHVNVGTIGH. A GTP-binding site is contributed by 19–26; sequence GHVDHGKT.

The protein belongs to the GTP-binding elongation factor family. EF-Tu/EF-1A subfamily. In terms of assembly, monomer.

Its subcellular location is the cytoplasm. Its function is as follows. This protein promotes the GTP-dependent binding of aminoacyl-tRNA to the A-site of ribosomes during protein biosynthesis. This chain is Elongation factor Tu (tufA), found in Eikenella corrodens.